A 13041-amino-acid chain; its full sequence is Nonribosomal peptide synthetase kk1B (13041 aa).

Positions Ala267–Arg663 are adenylation 1. Residues Ala788–Ser864 form the Carrier 1 domain. Ser825 is subject to O-(pantetheine 4'-phosphoryl)serine. Residues Ser882–Asp1313 form a condensation 1 region. The segment at Phe1341–Arg1736 is adenylation 2. Positions Ala1865 to Ser1939 constitute a Carrier 2 domain. An O-(pantetheine 4'-phosphoryl)serine modification is found at Ser1899. A condensation 2 region spans residues Ser1957–Leu2383. The adenylation 3 stretch occupies residues Gln2418–Arg2812. A methyltransferase (M) domain 1 region spans residues Val2891 to Leu3023. The Carrier 3 domain maps to Gly3353–Ser3427. Ser3387 is subject to O-(pantetheine 4'-phosphoryl)serine. Residues Ser3445–Leu3869 are condensation 3. The tract at residues Phe3901–Arg4300 is adenylation 4. A Carrier 4 domain is found at Pro4412–Ser4486. Position 4446 is an O-(pantetheine 4'-phosphoryl)serine (Ser4446). A condensation 4 region spans residues Ser4504–Asp4935. Residues Phe4963–Arg5362 form an adenylation 5 region. The methyltransferase (M) domain 2 stretch occupies residues Thr5430–Tyr5567. In terms of domain architecture, Carrier 5 spans Gln5897–Ser5971. Ser5931 bears the O-(pantetheine 4'-phosphoryl)serine mark. The interval Ser5989–Leu6416 is condensation 5. The tract at residues Gln6451–Arg6845 is adenylation 6. Residues Val6924 to Leu7056 are methyltransferase (M) domain 3. A Carrier 6 domain is found at Gly7386–Ser7460. Ser7420 carries the post-translational modification O-(pantetheine 4'-phosphoryl)serine. A condensation 6 region spans residues Ser7478–Ser7901. The segment at Phe7934 to Arg8335 is adenylation 7. Residues Tyr8404–Leu8540 are methyltransferase (M) domain 4. The 75-residue stretch at Gly8871–Ser8945 folds into the Carrier 7 domain. Ser8905 is subject to O-(pantetheine 4'-phosphoryl)serine. The segment at Ser8963–Leu9392 is condensation 7. An adenylation 8 region spans residues Phe9422–Arg9822. A Carrier 8 domain is found at Pro9943 to Ser10017. The residue at position 9977 (Ser9977) is an O-(pantetheine 4'-phosphoryl)serine. Residues Ser10035–Leu10462 form a condensation 8 region. The interval Phe10494 to Arg10892 is adenylation 9. Residues Ile10959–Leu11105 form a methyltransferase (M) domain 5 region. The Carrier 9 domain occupies Ser11428–Ser11502. Ser11462 carries the O-(pantetheine 4'-phosphoryl)serine modification. The condensation 9 stretch occupies residues Ser11520–Leu11945. The segment at Phe11977–Arg12377 is adenylation 10. The Carrier 10 domain occupies Val12495 to Ile12569. O-(pantetheine 4'-phosphoryl)serine is present on Ser12529. Positions Phe12647–Ile13032 are condensation 10.

It belongs to the NRP synthetase family.

It functions in the pathway secondary metabolite biosynthesis. Nonribosomal peptide synthetase; part of the gene cluster that mediates the biosynthesis of KK-1, a novel cyclic depsipeptide with 10 residues which is a promising active compound with high activity against many plant pathogens, especially Botrytis cinerea. The nonribosomal peptide synthetase (NRPS) kk1B catalyzes the elongation and cyclization of the decapeptide chain composed of 1 D-lactic acid residue (D-Lac), 1 pipecolic acid residue (Pip), 1 aspartic acid residue (Asp), 1 isoleucine residue (Ile), 1 glycine residue (Gly), 1 tyrosine residue (Tyr) and 4 valine residues (Val). The Asp, Ile and 3 Val residues are N-methylated by the 5 methyltransferase domains from the NRPS (found in modules 3, 5, 6, 7 and 9), whereas the Tyr residue is O-methylated by the cluster encoded O-methyltransferase kk1A. Cyclization with the hydroxy group of the D-lactic acid as a nucleophile is presumed to occur in the final module of NRPS, resulting in the formation of the depsipeptide ester bond through macrocyclization by the C-terminal C domain. The thioesterase kk1J is likely to be involved in the corrective mechanism of peptide chain synthesis. The D-lactate dehydrogenase kk1H is involved in the synthesis of D-lactic acid from pyruvic acid, which is recognized by the A domain of the first kk1B module. The pyrroline-5-carboxylate reductase kk1I is involved in the synthesis of the L-pipecolic acid residue of KK-1 from delta-1-pyrroline-5-carboxylate (P5C), a metabolic intermediate of lysine. It is still unclear how kk1C and kk1D are involved in the production of KK-1. The protein is Nonribosomal peptide synthetase kk1B of Curvularia clavata.